The primary structure comprises 238 residues: Urease accessory protein UreF (238 aa).

Belongs to the UreF family. In terms of assembly, ureD, UreF and UreG form a complex that acts as a GTP-hydrolysis-dependent molecular chaperone, activating the urease apoprotein by helping to assemble the nickel containing metallocenter of UreC. The UreE protein probably delivers the nickel.

Its subcellular location is the cytoplasm. In terms of biological role, required for maturation of urease via the functional incorporation of the urease nickel metallocenter. The protein is Urease accessory protein UreF of Rhodopseudomonas palustris (strain BisA53).